A 258-amino-acid chain; its full sequence is MMNPLIIKLGGVLLDSEEALERLFTALVNYRESHQRPLIIVHGGGCVVDELMKQLNLPVKKKNGLRVTPADQIDIITGALAGTANKTLLAWAKKHHIASVGLYLGDGDSVKVTQLDEELGHVGLAQPGSPKLINTLLEGGFLPVVSSIGVTEEGQLMNVNADQAATALAATLGADLILLSDVSGILDGKGQRIAEMTAAKAEQLIDQGIITDGMIVKVNAALDAARTLGRPVDIASWRHAEQLPALFNGTPIGTRILA.

Residues 44–45 (GG), Arg-66, and Asn-158 contribute to the substrate site. ATP-binding positions include 181 to 186 (DVSGIL) and 209 to 211 (IIT).

Belongs to the acetylglutamate kinase family. ArgB subfamily. In terms of assembly, homodimer.

It localises to the cytoplasm. The enzyme catalyses N-acetyl-L-glutamate + ATP = N-acetyl-L-glutamyl 5-phosphate + ADP. The protein operates within amino-acid biosynthesis; L-arginine biosynthesis; N(2)-acetyl-L-ornithine from L-glutamate: step 2/4. Functionally, catalyzes the ATP-dependent phosphorylation of N-acetyl-L-glutamate. The protein is Acetylglutamate kinase of Citrobacter koseri (strain ATCC BAA-895 / CDC 4225-83 / SGSC4696).